A 372-amino-acid polypeptide reads, in one-letter code: Proline-rich P65 protein homolog (372 aa).

Residues 1 to 37 (MEKNRSAFQQNQQASNQPFNQDQNQYYQDPNQQQFNQ) are compositionally biased toward low complexity. The tract at residues 1–100 (MEKNRSAFQQ…GFDPNQQYYQ (100 aa)) is disordered. 13 repeat units span residues 29-40 (DPNQQQFNQSGF), 41-52 (DPNQQQFNQPGF), 53-60 (DPNQQYYQ), 61-72 (DPNQQQFNQAGF), 73-80 (DQNQQYYQ), 81-92 (DPNQQQFNQPGF), 93-100 (DPNQQYYQ), 101-112 (DPNQQQFNQAGF), 113-119 (DQNQYYQ), 120-131 (DPNQQQFNQSGF), 132-138 (DQNQYYQ), 139-150 (DPNQQQFNQPSF), and 151-162 (DLNNQQFNQPGF). The span at 38 to 49 (SGFDPNQQQFNQ) shows a compositional bias: polar residues. The span at 53-100 (DPNQQYYQDPNQQQFNQAGFDQNQQYYQDPNQQQFNQPGFDPNQQYYQ) shows a compositional bias: low complexity. Positions 122 to 150 (NQQQFNQSGFDQNQYYQDPNQQQFNQPSF) are disordered.

This chain is Proline-rich P65 protein homolog, found in Mycoplasma genitalium (strain ATCC 33530 / DSM 19775 / NCTC 10195 / G37) (Mycoplasmoides genitalium).